A 475-amino-acid chain; its full sequence is BTB/POZ domain-containing protein 10 (475 aa).

The disordered stretch occupies residues 1–144; that stretch reads MAGRPHPYDS…SQSSSDGSCK (144 aa). The segment covering 22–31 has biased composition (basic residues); the sequence is LHSRPRKLYK. Over residues 57-80 the composition is skewed to basic and acidic residues; that stretch reads GHERSRDRRRSSDRSRDSSHERAE. The span at 81 to 94 shows a compositional bias: polar residues; the sequence is SQLTPCIRNVTSPT. Over residues 97-107 the composition is skewed to basic and acidic residues; that stretch reads HHIEREKDHSS. Residues 108–144 show a composition bias toward low complexity; the sequence is SRPSSPRPQRASPNGSMSSAGNSSRNSSQSSSDGSCK. The segment at 146–475 is interaction with AKT family members; it reads SGEMVFVYEN…LDPDAQNPML (330 aa). The BTB domain occupies 167 to 241; it reads ERVTLIVDNT…YKTGIIRCPD (75 aa). A disordered region spans residues 451–475; sequence ELDILPSHPASGNNDLDPDAQNPML.

As to quaternary structure, interacts (via C-terminal 330-amino-acid region) with AKT1; AKT2 and AKT3. Interacts with PPP2CA and PPP1CA. As to expression, ubiquitously expressed (at protein level).

It is found in the nucleus. The protein resides in the cytoplasm. Its function is as follows. Plays a major role as an activator of AKT family members by inhibiting PPP2CA-mediated dephosphorylation, thereby keeping AKTs activated. Plays a role in preventing motor neuronal death and in accelerating the growth of pancreatic beta cells. The chain is BTB/POZ domain-containing protein 10 (Btbd10) from Mus musculus (Mouse).